The primary structure comprises 336 residues: Protein SGT1 homolog (336 aa).

Ala-2 is modified (N-acetylalanine). 3 TPR repeats span residues 11–44 (SQRL…NPDD), 45–78 (AQYY…NPNN), and 79–112 (CTAL…DSTD). The 90-residue stretch at 140 to 229 (QSKIKYDWYQ…PEAVRWEKLE (90 aa)) folds into the CS domain. Residue Thr-236 is modified to Phosphothreonine. Positions 247–336 (MYPSSSHYTR…PPDDMEWKQY (90 aa)) constitute an SGS domain. At Ser-252 the chain carries Phosphoserine. Position 255 is a phosphothreonine (Thr-255). A Glycyl lysine isopeptide (Lys-Gly) (interchain with G-Cter in SUMO1); alternate cross-link involves residue Lys-266. Lys-266 participates in a covalent cross-link: Glycyl lysine isopeptide (Lys-Gly) (interchain with G-Cter in SUMO2); alternate. Ser-302 carries the post-translational modification Phosphoserine.

It belongs to the SGT1 family. In terms of assembly, probably associates with SCF (SKP1-CUL1-F-box protein) complex through interaction with SKP1. Interacts with S100A6. Interacts with HSP90. In terms of processing, phosphorylated at Ser-252 and Ser-302, dephosphorylation promotes nuclear translocation, most likely due to disruption of the SUGT1-HSP90 complex.

It localises to the cytoplasm. It is found in the nucleus. In terms of biological role, may play a role in ubiquitination and subsequent proteasomal degradation of target proteins. The polypeptide is Protein SGT1 homolog (Mus musculus (Mouse)).